A 402-amino-acid chain; its full sequence is Coiled-coil domain-containing protein 188 (402 aa).

Disordered stretches follow at residues 1–30, 50–74, and 108–131; these read MEGL…GGGL, HSVQ…EGEA, and HPGS…PCPC. Residues 154–189 adopt a coiled-coil conformation; sequence GLLGSAEQSFLQLEQENHSLKRQNQELREQLGALLG. Residues 347-363 traverse the membrane as a helical segment; sequence LLLGALLVWTAAYVYVV.

It localises to the membrane. The chain is Coiled-coil domain-containing protein 188 from Homo sapiens (Human).